The following is a 380-amino-acid chain: Alcohol dehydrogenase 3 (380 aa).

Residues cysteine 48, threonine 50, histidine 70, cysteine 100, cysteine 103, cysteine 106, cysteine 114, and cysteine 178 each contribute to the Zn(2+) site. Threonine 50 and histidine 70 together coordinate an alcohol. Residue threonine 50 participates in NAD(+) binding. Residues glycine 203 to glycine 208, aspartate 227, arginine 232, threonine 273, valine 296, valine 296 to valine 298, phenylalanine 323, and arginine 373 contribute to the NAD(+) site.

This sequence belongs to the zinc-containing alcohol dehydrogenase family. Homodimer. Homotetramer. It depends on Zn(2+) as a cofactor.

Its subcellular location is the cytoplasm. It catalyses the reaction a primary alcohol + NAD(+) = an aldehyde + NADH + H(+). It carries out the reaction a secondary alcohol + NAD(+) = a ketone + NADH + H(+). This Solanum tuberosum (Potato) protein is Alcohol dehydrogenase 3 (ADH3).